Reading from the N-terminus, the 331-residue chain is Phosphate acyltransferase (331 aa).

Belongs to the PlsX family. As to quaternary structure, homodimer. Probably interacts with PlsY.

The protein localises to the cytoplasm. It carries out the reaction a fatty acyl-[ACP] + phosphate = an acyl phosphate + holo-[ACP]. It functions in the pathway lipid metabolism; phospholipid metabolism. In terms of biological role, catalyzes the reversible formation of acyl-phosphate (acyl-PO(4)) from acyl-[acyl-carrier-protein] (acyl-ACP). This enzyme utilizes acyl-ACP as fatty acyl donor, but not acyl-CoA. This chain is Phosphate acyltransferase, found in Exiguobacterium sibiricum (strain DSM 17290 / CCUG 55495 / CIP 109462 / JCM 13490 / 255-15).